The sequence spans 467 residues: Glutamate--tRNA ligase (467 aa).

The 'HIGH' region motif lies at 9–19 (PSPTGYLHIGG). The short motif at 237–241 (KLSKR) is the 'KMSKS' region element. Lysine 240 provides a ligand contact to ATP.

It belongs to the class-I aminoacyl-tRNA synthetase family. Glutamate--tRNA ligase type 1 subfamily. In terms of assembly, monomer.

The protein resides in the cytoplasm. The enzyme catalyses tRNA(Glu) + L-glutamate + ATP = L-glutamyl-tRNA(Glu) + AMP + diphosphate. Its function is as follows. Catalyzes the attachment of glutamate to tRNA(Glu) in a two-step reaction: glutamate is first activated by ATP to form Glu-AMP and then transferred to the acceptor end of tRNA(Glu). The protein is Glutamate--tRNA ligase of Xanthomonas axonopodis pv. citri (strain 306).